We begin with the raw amino-acid sequence, 199 residues long: Small ribosomal subunit protein uS2 (199 aa).

This sequence belongs to the universal ribosomal protein uS2 family.

The sequence is that of Small ribosomal subunit protein uS2 (rps2) from Thermoplasma acidophilum (strain ATCC 25905 / DSM 1728 / JCM 9062 / NBRC 15155 / AMRC-C165).